Consider the following 232-residue polypeptide: MKIALLQHTPDPEAAVALAARLCYASVGIDELREKLSASDVTAFLDKIMSLGHQSVLEHASFTFGIEGISRAASHQLVRHRIASYSQQSQRYVTFRGDGFPRVVPGSVSATEKRRQVFESAMQACADAYRALVDDGVPAEDARFVLPNAAETKIIVTMNARELIHFFGLRCCERAQWEIRALAVEMLRLVKGVAPTIFRDAGPGCLTGPCPEGGMTCGKAAEVKRLFREMSI.

Residues methionine 1–glycine 204 form the ThyX domain. FAD-binding positions include serine 55, arginine 79–arginine 81, and glutamine 87. DUMP contacts are provided by residues glutamine 76 to arginine 79, glutamine 87 to arginine 91, and arginine 143. A ThyX motif motif is present at residues arginine 79–serine 89. FAD is bound by residues asparagine 159–arginine 161 and histidine 165. Residue arginine 170 participates in dUMP binding. The active-site Involved in ionization of N3 of dUMP, leading to its activation is the arginine 170.

It belongs to the thymidylate synthase ThyX family. In terms of assembly, homotetramer. FAD is required as a cofactor.

It carries out the reaction dUMP + (6R)-5,10-methylene-5,6,7,8-tetrahydrofolate + NADPH + H(+) = dTMP + (6S)-5,6,7,8-tetrahydrofolate + NADP(+). Its pathway is pyrimidine metabolism; dTTP biosynthesis. Catalyzes the reductive methylation of 2'-deoxyuridine-5'-monophosphate (dUMP) to 2'-deoxythymidine-5'-monophosphate (dTMP) while utilizing 5,10-methylenetetrahydrofolate (mTHF) as the methyl donor, and NADPH and FADH(2) as the reductant. The polypeptide is Flavin-dependent thymidylate synthase (Geobacter sulfurreducens (strain ATCC 51573 / DSM 12127 / PCA)).